Consider the following 1584-residue polypeptide: Kinesin-like protein unc-104 (1584 aa).

The 345-residue stretch at serine 3–isoleucine 347 folds into the Kinesin motor domain. Residue glycine 93–serine 100 participates in ATP binding. Residues valine 183–leucine 335 are microtubule-binding. 3 coiled-coil regions span residues glutamate 425–methionine 445, isoleucine 598–serine 652, and serine 777–glutamate 797. The interval isoleucine 1366 to serine 1416 is disordered. Residues asparagine 1376–valine 1394 are compositionally biased toward polar residues. Positions serine 1395–leucine 1409 are enriched in low complexity. In terms of domain architecture, PH spans valine 1460–alanine 1558.

Belongs to the TRAFAC class myosin-kinesin ATPase superfamily. Kinesin family. Unc-104 subfamily. Interacts with casy-1. As to expression, expressed in nerve ring, amphid commissure and ventral nerve cord (at protein level).

It localises to the cytoplasm. The protein localises to the cytoskeleton. The protein resides in the cell projection. It is found in the axon. In terms of biological role, motor protein involved in microtubule-associated anterograde transport. Regulates the transport of synaptic vesicle precursors in the axon of DA motor neurons. Regulates the polarized sorting of axonal proteins. Essential for the transport of synaptic components during the synaptic remodeling of the DD motor neuron, probably downstream of cdk-5 and/or pct-1/cyy-1 complex. Required for the anterograde transport of neuropeptide-containing dense core vesicles along axons. Involved in necrotic cell death. The chain is Kinesin-like protein unc-104 (unc-104) from Caenorhabditis elegans.